Here is a 104-residue protein sequence, read N- to C-terminus: Late embryogenis abundant protein 41 (104 aa).

A mitochondrion-targeting transit peptide spans 1–31; sequence MAARSLSGAVKSLCSAASGSLSCSIVLRRSY.

This sequence belongs to the LEA type 3 family.

The protein localises to the mitochondrion. The polypeptide is Late embryogenis abundant protein 41 (Arabidopsis thaliana (Mouse-ear cress)).